Here is a 277-residue protein sequence, read N- to C-terminus: Large ribosomal subunit protein uL2 (277 aa).

Disordered regions lie at residues 38 to 58 (HRKGGRNNQGRLTVRHQGGGH) and 219 to 277 (TVRG…RKNK).

It belongs to the universal ribosomal protein uL2 family. Part of the 50S ribosomal subunit. Forms a bridge to the 30S subunit in the 70S ribosome.

Functionally, one of the primary rRNA binding proteins. Required for association of the 30S and 50S subunits to form the 70S ribosome, for tRNA binding and peptide bond formation. It has been suggested to have peptidyltransferase activity; this is somewhat controversial. Makes several contacts with the 16S rRNA in the 70S ribosome. This Bacillus pumilus (strain SAFR-032) protein is Large ribosomal subunit protein uL2.